A 68-amino-acid chain; its full sequence is U-scoloptoxin(02)-Er1a (68 aa).

An N-terminal signal peptide occupies residues 1-20 (MIVSLRCCLLLVALLITVET). Cystine bridges form between cysteine 30–cysteine 52, cysteine 38–cysteine 58, and cysteine 42–cysteine 60.

This sequence belongs to the invertebrate defensin family. As to expression, expressed by the venom gland.

It localises to the secreted. In terms of biological role, antibacterial peptide mostly active against Gram-positive bacteria. This is U-scoloptoxin(02)-Er1a from Ethmostigmus rubripes (Giant centipede).